A 535-amino-acid polypeptide reads, in one-letter code: UDP-glycosyltransferase stmC (535 aa).

Asn70 and Asn422 each carry an N-linked (GlcNAc...) asparagine glycan. A helical membrane pass occupies residues Ala506–Ala526.

Belongs to the glycosyltransferase 28 family.

The protein resides in the membrane. It carries out the reaction stromemycin aglycone + UDP-alpha-D-glucose = stromemycin + UDP + H(+). The enzyme catalyses exophillate aglycone + UDP-alpha-D-glucose = exophillate + UDP + H(+). Its pathway is mycotoxin biosynthesis. In terms of biological role, UDP-glycosyltransferase; part of the gene cluster that mediates the biosynthesis of stromemycin, a depside C-glucoside with two unsaturated C9 side chains belonging to aromatic polyketide glycosides. Acts as the tailoring enzyme responsible for 3-C-glucosylation of bininalkenylresorcylic acid produced by the combined action of the HR-PKS stmA and the NR-PKS stmB to yield stromemycin. Possesses a relatively strict acceptor specificity towards bininalkenylresorcylic acid for C-glycosylation, but is able to use several donors including UDP-alpha-D-galactose, UDP-alpha-D-xylose, UDP-alpha-D-4-keto-6-deoxyglucose, UDP-alpha-D-quinovose, and UDP-beta-L-rhamnose. This is UDP-glycosyltransferase stmC from Aspergillus ustus.